The chain runs to 306 residues: Ribosomal protein L11 methyltransferase (306 aa).

T154, G179, D201, and N242 together coordinate S-adenosyl-L-methionine.

It belongs to the methyltransferase superfamily. PrmA family.

It localises to the cytoplasm. It catalyses the reaction L-lysyl-[protein] + 3 S-adenosyl-L-methionine = N(6),N(6),N(6)-trimethyl-L-lysyl-[protein] + 3 S-adenosyl-L-homocysteine + 3 H(+). In terms of biological role, methylates ribosomal protein L11. This Xylella fastidiosa (strain Temecula1 / ATCC 700964) protein is Ribosomal protein L11 methyltransferase.